Here is a 524-residue protein sequence, read N- to C-terminus: GMP synthase [glutamine-hydrolyzing] (524 aa).

Residues 10-199 (PVLVVDFGAQ…LTEVAGLEQT (190 aa)) enclose the Glutamine amidotransferase type-1 domain. The active-site Nucleophile is the Cys87. Catalysis depends on residues His173 and Glu175. Residues 200–398 (WTSANIAQQL…LGLPEEIVAR (199 aa)) enclose the GMPS ATP-PPase domain. Residue 228-234 (SGGVDSA) participates in ATP binding.

Homodimer.

The catalysed reaction is XMP + L-glutamine + ATP + H2O = GMP + L-glutamate + AMP + diphosphate + 2 H(+). It functions in the pathway purine metabolism; GMP biosynthesis; GMP from XMP (L-Gln route): step 1/1. Catalyzes the synthesis of GMP from XMP. The polypeptide is GMP synthase [glutamine-hydrolyzing] (guaA) (Corynebacterium ammoniagenes (Brevibacterium ammoniagenes)).